The sequence spans 106 residues: MSEEFQESEVIFSDESFTRKDNKISHNNENYERKSTEKDKISSPVRIPSRTTIRYTEEEGEMTPPHVIIEKRRTEAQMAFSFCTLKGRDLSRHRNTVLRMTGFLEV.

The interval 1–65 (MSEEFQESEV…TEEEGEMTPP (65 aa)) is disordered. A compositionally biased stretch (basic and acidic residues) spans 16-41 (SFTRKDNKISHNNENYERKSTEKDKI).

This sequence belongs to the senescence regulator S40 family.

The protein resides in the nucleus. Its function is as follows. Regulates senescence either by modulating WRKY53 or by activating SAG12. Affects the natural variation of cyst nematodes sex ratio and susceptibility to parasitic nematodes, depending on single nucleotide polymorphism (SNPs) between cultivars. The sequence is that of Protein S40-3 from Arabidopsis thaliana (Mouse-ear cress).